Consider the following 113-residue polypeptide: U11-theraphotoxin-Hhn1a (113 aa).

The N-terminal stretch at 1–21 is a signal peptide; the sequence is MNTVRVTFLLVFVLAVSLGQA. Residues 22 to 74 constitute a propeptide that is removed on maturation; it reads DKDENRMEMQEKTEQGNSYLDFAENLLLQKLEELEAKLLEEDSEESRNSRQKR. Positions 60 to 69 are enriched in basic and acidic residues; it reads LEEDSEESRN. Residues 60-83 form a disordered region; sequence LEEDSEESRNSRQKRCIGEGVPCD. Cystine bridges form between cysteine 75-cysteine 90, cysteine 82-cysteine 95, and cysteine 89-cysteine 110.

It belongs to the neurotoxin 14 (magi-1) family. 01 (HNTX-16) subfamily. As to expression, expressed by the venom gland.

Its subcellular location is the secreted. Functionally, probable ion channel inhibitor. The sequence is that of U11-theraphotoxin-Hhn1a from Cyriopagopus hainanus (Chinese bird spider).